A 351-amino-acid chain; its full sequence is DNA polymerase IV (351 aa).

The region spanning 4 to 185 is the UmuC domain; that stretch reads IIHVDMDCFY…LPLGKIPGVG (182 aa). Mg(2+) contacts are provided by aspartate 8 and aspartate 103. Residue glutamate 104 is part of the active site.

It belongs to the DNA polymerase type-Y family. Monomer. Requires Mg(2+) as cofactor.

Its subcellular location is the cytoplasm. It catalyses the reaction DNA(n) + a 2'-deoxyribonucleoside 5'-triphosphate = DNA(n+1) + diphosphate. In terms of biological role, poorly processive, error-prone DNA polymerase involved in untargeted mutagenesis. Copies undamaged DNA at stalled replication forks, which arise in vivo from mismatched or misaligned primer ends. These misaligned primers can be extended by PolIV. Exhibits no 3'-5' exonuclease (proofreading) activity. May be involved in translesional synthesis, in conjunction with the beta clamp from PolIII. The protein is DNA polymerase IV of Citrobacter koseri (strain ATCC BAA-895 / CDC 4225-83 / SGSC4696).